The following is a 188-amino-acid chain: FMN-dependent NADPH-azoreductase (188 aa).

This sequence belongs to the azoreductase type 2 family. In terms of assembly, homotetramer. It depends on FMN as a cofactor.

Its function is as follows. Catalyzes the reductive cleavage of azo bond in aromatic azo compounds to the corresponding amines. Requires NADPH, but not NADH, as an electron donor for its activity. The protein is FMN-dependent NADPH-azoreductase (azo1) of Staphylococcus haemolyticus (strain JCSC1435).